A 382-amino-acid polypeptide reads, in one-letter code: Neuropeptide Y receptor type 1 (382 aa).

The Extracellular portion of the chain corresponds to 1 to 33 (MNSTLFSRVENYSVHYNVSENSPFLAFENDDCH). Asparagine 2, asparagine 11, and asparagine 17 each carry an N-linked (GlcNAc...) asparagine glycan. A helical transmembrane segment spans residues 34–54 (LPLAVIFTLALAYGAVIILGV). Residues 55 to 75 (SGNLALIIIILKQKEMRNVTN) are Cytoplasmic-facing. The chain crosses the membrane as a helical span at residues 76-96 (ILIVNLSFSDLLVAVMCLPFT). Residues 97-115 (FVYTLMDHWVFGETMCKLN) are Extracellular-facing. Cysteine 112 and cysteine 197 are joined by a disulfide. The helical transmembrane segment at 116–136 (PFVQCVSITVSIFSLVLIAVE) threads the bilayer. Residues 137–153 (RHQLIINPRGWRPNNRH) lie on the Cytoplasmic side of the membrane. Residues 154 to 174 (AYIGITVIWVLAVASSLPFVI) traverse the membrane as a helical segment. Over 175–210 (YQILTDEPFQNVSLAAFKDKYVCFDKFPSDSHRLSY) the chain is Extracellular. A helical transmembrane segment spans residues 211 to 231 (TTLLLVLQYFGPLCFIFICYF). The Cytoplasmic segment spans residues 232-259 (KIYIRLKRRNNMMDKIRDSKYRSSETKR). The chain crosses the membrane as a helical span at residues 260–280 (INVMLLSIVVAFAVCWLPLTI). Over 281 to 298 (FNTVFDWNHQIIATCNHN) the chain is Extracellular. A helical membrane pass occupies residues 299 to 319 (LLFLLCHLTAMISTCVNPIFY). Topologically, residues 320 to 382 (GFLNKNFQRD…KISMNDNEKI (63 aa)) are cytoplasmic. Residue cysteine 337 is the site of S-palmitoyl cysteine attachment. A phosphoserine mark is found at serine 367 and serine 375.

It belongs to the G-protein coupled receptor 1 family. As to expression, brain.

Its subcellular location is the cell membrane. Its function is as follows. Receptor for neuropeptide Y and peptide YY. The protein is Neuropeptide Y receptor type 1 (Npy1r) of Rattus norvegicus (Rat).